The chain runs to 600 residues: Elongation factor 4 (600 aa).

Positions 5–187 (KYIRNFSIIA…AIINKLPAPK (183 aa)) constitute a tr-type G domain. GTP is bound by residues 17-22 (DHGKST) and 134-137 (NKID).

The protein belongs to the TRAFAC class translation factor GTPase superfamily. Classic translation factor GTPase family. LepA subfamily.

It localises to the cell inner membrane. The enzyme catalyses GTP + H2O = GDP + phosphate + H(+). Its function is as follows. Required for accurate and efficient protein synthesis under certain stress conditions. May act as a fidelity factor of the translation reaction, by catalyzing a one-codon backward translocation of tRNAs on improperly translocated ribosomes. Back-translocation proceeds from a post-translocation (POST) complex to a pre-translocation (PRE) complex, thus giving elongation factor G a second chance to translocate the tRNAs correctly. Binds to ribosomes in a GTP-dependent manner. This chain is Elongation factor 4, found in Rickettsia prowazekii (strain Madrid E).